Reading from the N-terminus, the 246-residue chain is 23S rRNA (guanosine-2'-O-)-methyltransferase RlmB (246 aa).

S-adenosyl-L-methionine contacts are provided by Gly-197, Ile-217, and Leu-226.

Belongs to the class IV-like SAM-binding methyltransferase superfamily. RNA methyltransferase TrmH family. RlmB subfamily.

It localises to the cytoplasm. It carries out the reaction guanosine(2251) in 23S rRNA + S-adenosyl-L-methionine = 2'-O-methylguanosine(2251) in 23S rRNA + S-adenosyl-L-homocysteine + H(+). Functionally, specifically methylates the ribose of guanosine 2251 in 23S rRNA. This chain is 23S rRNA (guanosine-2'-O-)-methyltransferase RlmB, found in Haemophilus ducreyi (strain 35000HP / ATCC 700724).